The chain runs to 814 residues: E3 ubiquitin-protein ligase TRIM71 (814 aa).

Residues 12 to 76 (CPLCKEMCVS…SLQLRCPVCD (65 aa)) form an RING-type zinc finger. A disordered region spans residues 111-146 (QQQSNGGRTASNRQRSASCSSSGLLRRAPPSQSEPR). Residues 120-138 (ASNRQRSASCSSSGLLRRA) are compositionally biased toward low complexity. The segment at 142–189 (QSEPRCSSCDDGNGASSHCLDCQENLCDNCLRAHQRVRLTKDHFIERF) adopts a B box-type 1; atypical zinc-finger fold. Zn(2+) is bound by residues cysteine 147, cysteine 150, cysteine 171, histidine 175, cysteine 224, histidine 227, cysteine 247, and histidine 252. The segment at 219-260 (PERLYCQQHDEEVLHFYCDSCSVPICRECTMGRHAGHSFVYL) adopts a B box-type 2 zinc-finger fold. Residues 282-370 (RQAIQLSLEQ…INAVQQVLEE (89 aa)) adopt a coiled-coil conformation. A Filamin repeat occupies 425-526 (SSGAFAALTK…IENSPFKVNV (102 aa)). 6 NHL repeats span residues 539–582 (TLSF…FKPC), 586–629 (HHKF…FTFE), 633–676 (LLKF…FGPD), 680–723 (LNKY…IKPD), 727–770 (AHFL…FEPN), and 774–814 (LCKF…ILAF).

Belongs to the TRIM/RBCC family.

The protein localises to the cytoplasm. It localises to the P-body. It carries out the reaction S-ubiquitinyl-[E2 ubiquitin-conjugating enzyme]-L-cysteine + [acceptor protein]-L-lysine = [E2 ubiquitin-conjugating enzyme]-L-cysteine + N(6)-ubiquitinyl-[acceptor protein]-L-lysine.. The protein operates within protein modification; protein ubiquitination. In terms of biological role, E3 ubiquitin-protein ligase that cooperates with the microRNAs (miRNAs) machinery and promotes embryonic stem cells proliferation and maintenance. Binds to miRNAs and participates in post-transcriptional repression of transcripts. Required to maintain proliferation and prevent premature differentiation of neural progenitor cells during early neural development. This chain is E3 ubiquitin-protein ligase TRIM71 (trim71), found in Xenopus tropicalis (Western clawed frog).